Consider the following 208-residue polypeptide: FMN-dependent NADH:quinone oxidoreductase (208 aa).

FMN contacts are provided by residues Ser10, 16-18, 94-97, and 138-141; these read SVS, MYNF, and SRGG.

It belongs to the azoreductase type 1 family. As to quaternary structure, homodimer. The cofactor is FMN.

The enzyme catalyses 2 a quinone + NADH + H(+) = 2 a 1,4-benzosemiquinone + NAD(+). The catalysed reaction is N,N-dimethyl-1,4-phenylenediamine + anthranilate + 2 NAD(+) = 2-(4-dimethylaminophenyl)diazenylbenzoate + 2 NADH + 2 H(+). Its function is as follows. Quinone reductase that provides resistance to thiol-specific stress caused by electrophilic quinones. In terms of biological role, also exhibits azoreductase activity. Catalyzes the reductive cleavage of the azo bond in aromatic azo compounds to the corresponding amines. This is FMN-dependent NADH:quinone oxidoreductase from Hyphomonas neptunium (strain ATCC 15444).